Here is a 197-residue protein sequence, read N- to C-terminus: Protein RESISTANCE TO PHYTOPHTHORA 1, chloroplastic (197 aa).

The transit peptide at 1 to 52 directs the protein to the chloroplast; sequence MSWSLCSTHGVSSSIALTYGFRHRRRSTFRIFATSDGLEPKDDPPESPLPSS. The disordered stretch occupies residues 35–56; the sequence is SDGLEPKDDPPESPLPSSSSAL. The next 4 helical transmembrane spans lie at 93–113, 120–140, 150–170, and 173–193; these read FEVQ…NLLF, LWRL…LRAR, LNYL…FWKS, and LVWS…LGWL.

It localises to the plastid. It is found in the chloroplast. Its subcellular location is the membrane. Functionally, plays a positive role in the immune response to the oomycetes P.brassicae, including induced oxidative burst (e.g. H(2)O(2)) and enhanced expression of defense-related genes. The polypeptide is Protein RESISTANCE TO PHYTOPHTHORA 1, chloroplastic (Arabidopsis thaliana (Mouse-ear cress)).